Here is a 229-residue protein sequence, read N- to C-terminus: Aldehyde oxidoreductase iron-sulfur-binding subunit PaoA (229 aa).

A disordered region spans residues 1-21; sequence MSNQGEYPEDNRVGKHEPHDL. Positions 1 to 53 form a signal peptide, tat-type signal; sequence MSNQGEYPEDNRVGKHEPHDLSLTRRDLIKVSAATAAAAVVYPHSTLAASVPA. Positions 9–21 are enriched in basic and acidic residues; that stretch reads EDNRVGKHEPHDL. Residues 61–137 enclose the 2Fe-2S ferredoxin-type domain; the sequence is MPLTLKVNGK…GAEITTIEGL (77 aa). 9 residues coordinate [2Fe-2S] cluster: cysteine 99, cysteine 104, glycine 105, cysteine 107, cysteine 119, cysteine 158, cysteine 161, cysteine 208, and cysteine 210.

As to quaternary structure, heterotrimer composed of PaoA, PaoB and PaoC. [2Fe-2S] cluster serves as cofactor. In terms of processing, exported by the Tat system. The position of the signal peptide cleavage has not been experimentally proven.

It is found in the periplasm. It catalyses the reaction an aldehyde + A + H2O = a carboxylate + AH2 + H(+). Its function is as follows. Oxidizes aldehydes to the corresponding carboxylic acids with a preference for aromatic aldehydes. It might play a role in the detoxification of aldehydes to avoid cell damage. In Escherichia coli O157:H7, this protein is Aldehyde oxidoreductase iron-sulfur-binding subunit PaoA.